The following is a 272-amino-acid chain: Methylsterol monooxygenase 2-1 (272 aa).

3 consecutive transmembrane segments (helical) span residues I24–L44, L72–M94, and V107–H127. The 147-residue stretch at L113–T259 folds into the Fatty acid hydroxylase domain. Residues H127–H131 carry the Histidine box-1 motif. The Histidine box-2 motif lies at H140 to H144. Helical transmembrane passes span I162 to T182 and N209 to A229. Positions F231–R237 match the Histidine box-3 motif.

Belongs to the sterol desaturase family. It depends on Fe cation as a cofactor. In terms of tissue distribution, strongly expressed in leaves, flowers, siliques and developing seeds.

It localises to the endoplasmic reticulum membrane. The catalysed reaction is 4,4-dimethyl-5alpha-cholest-7-en-3beta-ol + 6 Fe(II)-[cytochrome b5] + 3 O2 + 5 H(+) = 4alpha-carboxy-4beta-methyl-5alpha-cholest-7-ene-3beta-ol + 6 Fe(III)-[cytochrome b5] + 4 H2O. It catalyses the reaction 24-methylidenelophenol + 6 Fe(II)-[cytochrome b5] + 3 O2 + 5 H(+) = 4alpha-carboxy-ergosta-7,24(24(1))-dien-3beta-ol + 6 Fe(III)-[cytochrome b5] + 4 H2O. Non-heme iron oxygenase involved in sterols biosynthesis by catalyzing the removal of the second methyl group at the C-4 position. 24-ethylidenelophenol and 24-ethyllophenol are the preferred substrates. Together with SMO2-2, required during embryogenesis, probably by maintaining sterols and auxin homeostasis. The chain is Methylsterol monooxygenase 2-1 from Arabidopsis thaliana (Mouse-ear cress).